A 753-amino-acid polypeptide reads, in one-letter code: Taperin (753 aa).

The tract at residues 141 to 348 (FDSPAAPRRR…IRPSSKPDME (208 aa)) is disordered. The segment covering 182-197 (PAPPVLPSQPAPPISP) has biased composition (pro residues). 2 stretches are compositionally biased toward polar residues: residues 230 to 239 (LQKTGSNSFT) and 250 to 263 (VNRSLSNGPMTQES). S274 carries the post-translational modification Phosphoserine. Positions 300–322 (TPSATPVGPPAFLAPSPASATPS) are enriched in low complexity. The segment covering 323–335 (QRQWVSSATSAND) has biased composition (polar residues). Residues 337 to 347 (FEIRPSSKPDM) are compositionally biased toward basic and acidic residues. Phosphoserine is present on residues S402, S458, and S502. A disordered region spans residues 438–488 (GCPRPAISDTDKSVRRQRPASPPPFLPATTEAEPAEGLGVPGLTKNGQEPV). Disordered regions lie at residues 544-583 (FTVVPKRKPGTLQEPHLSQTNGQFQQGAEEQDADSLSGPH) and 637-676 (FEYPSESSLAQEEAEEEEEEEEEEEGEDGEEEEVGPDSEK). The segment covering 559–571 (HLSQTNGQFQQGA) has biased composition (polar residues). The segment covering 648 to 672 (EEAEEEEEEEEEEEGEDGEEEEVGP) has biased composition (acidic residues).

This sequence belongs to the taperin family. Interacts with GRXCR2; the interaction restricts TPRN to the stereocilum basal region. Interacts with actin ACTB; the interaction may stabilize stereocilia. Interacts with CLIC5. Interacts with PTPRQ. TPRN, CLIC5 and PTPQR form concentric rings at the base of stereocilia and may form a complex. Interacts with phosphatase PPP1CA; the interaction results in inhibition of PPC1A phosphatase activity. Interacts with DNA damage response proteins XRCC6/KU70, XRCC5/KU80, PARP1, TOP1 and TOP2A; these interactions recruit TPRN to sites of DNA damage where it may play a role in DNA repair.

It is found in the cell projection. Its subcellular location is the stereocilium. It localises to the microvillus. The protein localises to the nucleus. The protein resides in the nucleoplasm. It is found in the cytoplasm. In terms of biological role, essential for hearing. Required for maintenance of stereocilia on both inner and outer hair cells. Necessary for the integrity of the stereociliary rootlet. May act as an actin cytoskeleton regulator involved in the regulation of actin dynamics at the pointed end in hair cells. Forms rings at the base of stereocilia and binds actin filaments in the stereocilia which may stabilize the stereocilia. Acts as a strong inhibitor of PPP1CA phosphatase activity. Recruited to sites of DNA damage and may play a role in DNA damage repair. The protein is Taperin (Tprn) of Rattus norvegicus (Rat).